Here is an 847-residue protein sequence, read N- to C-terminus: Leucine--tRNA ligase (847 aa).

The 'HIGH' region signature appears at 41–51 (PYPSGRIHMGH). The 'KMSKS' region motif lies at 619–623 (KMSKS). Lysine 622 contacts ATP.

It belongs to the class-I aminoacyl-tRNA synthetase family.

The protein resides in the cytoplasm. The enzyme catalyses tRNA(Leu) + L-leucine + ATP = L-leucyl-tRNA(Leu) + AMP + diphosphate. This is Leucine--tRNA ligase from Cereibacter sphaeroides (strain KD131 / KCTC 12085) (Rhodobacter sphaeroides).